Reading from the N-terminus, the 230-residue chain is uncharacterized protein (230 aa).

A signal peptide spans 1–21 (MARYDARLRGIGKAHACSAFA). The segment at 47–190 (SASVQENFIA…TVQTSSSGDP (144 aa)) is disordered. Over residues 141–150 (PQSQTSANSQ) the composition is skewed to polar residues. Over residues 151–165 (KKPEIRCRERSKNAR) the composition is skewed to basic and acidic residues. A compositionally biased stretch (polar residues) spans 173 to 188 (AVATNEAETVQTSSSG).

It to R.meliloti RA0936 and y4aO.

This is an uncharacterized protein from Sinorhizobium fredii (strain NBRC 101917 / NGR234).